The sequence spans 365 residues: Aminomethyltransferase (365 aa).

This sequence belongs to the GcvT family. The glycine cleavage system is composed of four proteins: P, T, L and H.

The enzyme catalyses N(6)-[(R)-S(8)-aminomethyldihydrolipoyl]-L-lysyl-[protein] + (6S)-5,6,7,8-tetrahydrofolate = N(6)-[(R)-dihydrolipoyl]-L-lysyl-[protein] + (6R)-5,10-methylene-5,6,7,8-tetrahydrofolate + NH4(+). Its function is as follows. The glycine cleavage system catalyzes the degradation of glycine. This chain is Aminomethyltransferase, found in Chlorobaculum parvum (strain DSM 263 / NCIMB 8327) (Chlorobium vibrioforme subsp. thiosulfatophilum).